The chain runs to 477 residues: uncharacterized protein (477 aa).

Transmembrane regions (helical) follow at residues 31–51, 60–80, 103–123, 130–150, 177–197, 205–225, 248–268, 291–311, 334–354, 359–379, 384–404, and 433–453; these read LLRL…LLGT, LGVP…VAPF, LWFG…SLIL, MGPA…AGVG, LLYV…GWLL, LIRV…IALW, AWGL…VMVG, VGQT…GFIW, IVAF…LFFA, IGLG…MVVV, GIAL…AVFI, and VVYV…GPLV.

It belongs to the PucC family.

The protein localises to the cell membrane. This is an uncharacterized protein from Rhodobacter capsulatus (Rhodopseudomonas capsulata).